The primary structure comprises 211 residues: CASP-like protein 1B1 (211 aa).

The interval 1 to 29 is disordered; the sequence is MDLERGSKTPPSSAPAAAAATTTTSTCCS. Over 1 to 55 the chain is Cytoplasmic; the sequence is MDLERGSKTPPSSAPAAAAATTTTSTCCSNKRPQLRDRLVALQPVVLRAAATLAT. The segment covering 9-26 has biased composition (low complexity); that stretch reads TPPSSAPAAAAATTTTST. A helical membrane pass occupies residues 56–76; that stretch reads AVAAAVMALNAQSYTAVVAIV. Topologically, residues 77 to 94 are extracellular; it reads GTRPLTQTFTTKFRDTPA. Residues 95–115 traverse the membrane as a helical segment; that stretch reads FVYFVIANAIAAVYNLVMLLF. Over 116-123 the chain is Cytoplasmic; it reads RCLILRRR. A helical transmembrane segment spans residues 124 to 144; it reads MAGLVVHMLDMVIMALLATGA. The Extracellular portion of the chain corresponds to 145-176; it reads ATAAAMAELGKNGNVHARWNPICDRFGSFCSR. A helical membrane pass occupies residues 177-197; sequence GGVALASSFTGVALMLALNLL. The Cytoplasmic segment spans residues 198-211; the sequence is SAASNAQCSPGQYE.

This sequence belongs to the Casparian strip membrane proteins (CASP) family. Homodimer and heterodimers.

The protein localises to the cell membrane. The sequence is that of CASP-like protein 1B1 from Sorghum bicolor (Sorghum).